The following is a 21-amino-acid chain: Fibrinogen beta chain (21 aa).

The residue at position 1 (Gln1) is a Pyrrolidone carboxylic acid. Residues 1–11 are compositionally biased toward acidic residues; sequence QHSTDYDEVED. A disordered region spans residues 1–21; it reads QHSTDYDEVEDDRAKLHLDAR. A glycan (O-linked (GalNAc...) threonine) is linked at Thr4. A Sulfotyrosine modification is found at Tyr6. Residues 12–21 show a composition bias toward basic and acidic residues; the sequence is DRAKLHLDAR.

As to quaternary structure, heterohexamer; disulfide linked. Contains 2 sets of 3 non-identical chains (alpha, beta and gamma). The 2 heterotrimers are in head to head conformation with the N-termini in a small central domain. Post-translationally, conversion of fibrinogen to fibrin is triggered by thrombin, which cleaves fibrinopeptides A and B from alpha and beta chains, and thus exposes the N-terminal polymerization sites responsible for the formation of the soft clot.

Its subcellular location is the secreted. Cleaved by the protease thrombin to yield monomers which, together with fibrinogen alpha (FGA) and fibrinogen gamma (FGG), polymerize to form an insoluble fibrin matrix. Fibrin has a major function in hemostasis as one of the primary components of blood clots. In addition, functions during the early stages of wound repair to stabilize the lesion and guide cell migration during re-epithelialization. Was originally thought to be essential for platelet aggregation, based on in vitro studies using anticoagulated blood. However subsequent studies have shown that it is not absolutely required for thrombus formation in vivo. Enhances expression of SELP in activated platelets. Maternal fibrinogen is essential for successful pregnancy. Fibrin deposition is also associated with infection, where it protects against IFNG-mediated hemorrhage. May also facilitate the antibacterial immune response via both innate and T-cell mediated pathways. This is Fibrinogen beta chain (FGB) from Muntiacus muntjak (Barking deer).